We begin with the raw amino-acid sequence, 417 residues long: Caveolae-associated protein 2 (417 aa).

The disordered stretch occupies residues 1 to 42; the sequence is MGEDAAQAEKFQHPNTDMLQEKPSNPSPMPSSTPSPSLNLGS. The residue at position 2 (Gly2) is an N-acetylglycine. Positions 2–168 are interaction with CAVIN1; sequence GEDAAQAEKF…IFQEESEIPA (167 aa). Phosphoserine is present on residues Ser27, Ser35, Ser37, and Ser51. Coiled-coil stretches lie at residues 61–87 and 126–267; these read LLDKLVNMLDAVRENQHNMEQRQINLE and RAVR…VERR. The leucine-zipper stretch occupies residues 62–100; it reads LDKLVNMLDAVRENQHNMEQRQINLEGSVKGIQNDLTKL. A Phosphothreonine modification is found at Thr195. Disordered stretches follow at residues 198–242 and 256–381; these read NVDL…DSLK and KLGT…ALQQ. Residues Ser202, Ser203, and Ser217 each carry the phosphoserine modification. Positions 202–218 are enriched in acidic residues; it reads SSDDELPGDEEALEDSA. Positions 219–242 are enriched in basic and acidic residues; the sequence is EEKMEESRAEKIKRSSLKKVDSLK. Over residues 274 to 286 the composition is skewed to polar residues; sequence LTPNHQKASSGKS. Phosphoserine occurs at positions 282, 283, 286, 287, 292, and 295. The segment covering 302–320 has biased composition (basic and acidic residues); it reads REGESSAENETKLEEQVQD. Phosphoserine is present on residues Ser326, Ser335, Ser358, and Ser362. Over residues 354–365 the composition is skewed to polar residues; it reads RGNNSGVGSNAD. Thr367 is modified (phosphothreonine). Over residues 367–376 the composition is skewed to acidic residues; sequence TIEEDEEEES. Phosphotyrosine is present on Tyr387. A phosphoserine mark is found at Ser389 and Ser395.

The protein belongs to the CAVIN family. Component of the CAVIN complex composed of CAVIN1, CAVIN2, CAVIN3 and CAVIN. Interacts with CAVIN4; this augments the transactivation of NPPA by CAVIN4. Binds to PRKCA in the presence of phosphatidylserine. Interacts with CAVIN1 and CAV3. In terms of processing, the N-terminus is blocked. Phosphorylated on Ser residues.

It is found in the cytoplasm. The protein localises to the cytosol. Its subcellular location is the membrane. The protein resides in the caveola. In terms of biological role, plays an important role in caveolar biogenesis and morphology. Regulates caveolae morphology by inducing membrane curvature within caveolae. Plays a role in caveola formation in a tissue-specific manner. Required for the formation of caveolae in the lung and fat endothelia but not in the heart endothelia. Negatively regulates the size or stability of CAVIN complexes in the lung endothelial cells. May play a role in targeting PRKCA to caveolae. This chain is Caveolae-associated protein 2, found in Rattus norvegicus (Rat).